Here is a 1088-residue protein sequence, read N- to C-terminus: RNA-directed RNA polymerase (1088 aa).

Residues 501–687 form the RdRp catalytic domain; sequence LSYGDVTRFL…AKRYIAGGKI (187 aa).

The protein belongs to the reoviridae RNA-directed RNA polymerase family. Interacts with VP3 (Potential). Interacts with VP2; this interaction activates VP1. Interacts with NSP5; this interaction is probably necessary for the formation of functional virus factories. Interacts with NSP2; this interaction is weak. It depends on Mg(2+) as a cofactor.

It localises to the virion. It carries out the reaction RNA(n) + a ribonucleoside 5'-triphosphate = RNA(n+1) + diphosphate. RNA-directed RNA polymerase that is involved in both transcription and genome replication. Together with VP3 capping enzyme, forms an enzyme complex positioned near the channels situated at each of the five-fold vertices of the core. Following infection, the outermost layer of the virus is lost, leaving a double-layered particle (DLP) made up of the core and VP6 shell. VP1 then catalyzes the transcription of fully conservative plus-strand genomic RNAs that are extruded through the DLP's channels into the cytoplasm where they function as mRNAs for translation of viral proteins. One copy of each of the viral (+)RNAs is also recruited during core assembly, together with newly synthesized polymerase complexes and VP2. The polymerase of these novo-formed particles catalyzes the synthesis of complementary minus-strands leading to dsRNA formation. To do so, the polymerase specifically recognizes and binds 4 bases 5'-UGUG-3' in the conserved 3'-sequence of plus-strand RNA templates. VP2 presumably activates the autoinhibited VP1-RNA complex to coordinate packaging and genome replication. Once dsRNA synthesis is complete, the polymerase switches to the transcriptional mode, thus providing secondary transcription. The chain is RNA-directed RNA polymerase from Homo sapiens (Human).